A 313-amino-acid chain; its full sequence is Protoheme IX farnesyltransferase (313 aa).

8 consecutive transmembrane segments (helical) span residues 34–54, 56–76, 105–125, 128–148, 152–172, 173–193, 237–257, and 291–311; these read VIELLLVTTIPAMLLADRGTV, PLLIINTLVGGLLAAAGANTL, HALIFGLTLSVASFFWLWSTT, LSAHLAGATIAFYVLVYTLLL, TSQNVVWGGAAGCMPVMIGWS, AVTGTIQWPALVMFLIIFFWT, VLATLALALTTGWLYASVAIL, and YLAVVFVALAVDSALALPTLL.

This sequence belongs to the UbiA prenyltransferase family. Protoheme IX farnesyltransferase subfamily.

It is found in the cell membrane. It carries out the reaction heme b + (2E,6E)-farnesyl diphosphate + H2O = Fe(II)-heme o + diphosphate. It functions in the pathway porphyrin-containing compound metabolism; heme O biosynthesis; heme O from protoheme: step 1/1. Converts heme B (protoheme IX) to heme O by substitution of the vinyl group on carbon 2 of heme B porphyrin ring with a hydroxyethyl farnesyl side group. The protein is Protoheme IX farnesyltransferase of Mycolicibacterium gilvum (strain PYR-GCK) (Mycobacterium gilvum (strain PYR-GCK)).